Reading from the N-terminus, the 183-residue chain is Ribosome-recycling factor (183 aa).

This sequence belongs to the RRF family.

Its subcellular location is the cytoplasm. Its function is as follows. Responsible for the release of ribosomes from messenger RNA at the termination of protein biosynthesis. May increase the efficiency of translation by recycling ribosomes from one round of translation to another. In Bifidobacterium longum subsp. infantis (strain ATCC 15697 / DSM 20088 / JCM 1222 / NCTC 11817 / S12), this protein is Ribosome-recycling factor.